We begin with the raw amino-acid sequence, 345 residues long: Achaete-scute complex protein T4 (345 aa).

Positions 78 to 92 (SESVSSLSPGSSPAP) are enriched in low complexity. The segment at 78–109 (SESVSSLSPGSSPAPYNVDQSQSVQRRNARER) is disordered. A bHLH domain is found at 99–162 (QSVQRRNARE…RIAVEYIRRL (64 aa)).

As to quaternary structure, efficient DNA binding requires dimerization with another bHLH protein. Interacts with da (via bHLH motif). Interacts with Bap60. L(1)SC, SC and AC strongly label the presumptive stomatogastric nervous system, while ASE is more prominent in the presumptive procephalic lobe. Associates with the somatic nuclei through nuclear cycles 9 and 10. During nuclear cycle 11 distributes uniformly in the embryo.

Functionally, AS-C proteins are involved in the determination of the neuronal precursors in the peripheral nervous system and the central nervous system. Also involved in sex determination and dosage compensation. This chain is Achaete-scute complex protein T4 (sc), found in Drosophila melanogaster (Fruit fly).